The following is a 267-amino-acid chain: Tryptophan synthase alpha chain (267 aa).

Catalysis depends on proton acceptor residues Glu-49 and Asp-60.

Belongs to the TrpA family. Tetramer of two alpha and two beta chains.

It catalyses the reaction (1S,2R)-1-C-(indol-3-yl)glycerol 3-phosphate + L-serine = D-glyceraldehyde 3-phosphate + L-tryptophan + H2O. The protein operates within amino-acid biosynthesis; L-tryptophan biosynthesis; L-tryptophan from chorismate: step 5/5. In terms of biological role, the alpha subunit is responsible for the aldol cleavage of indoleglycerol phosphate to indole and glyceraldehyde 3-phosphate. This is Tryptophan synthase alpha chain from Acaryochloris marina (strain MBIC 11017).